The sequence spans 258 residues: UPF0246 protein YaaA (258 aa).

Belongs to the UPF0246 family.

This chain is UPF0246 protein YaaA, found in Escherichia coli O6:K15:H31 (strain 536 / UPEC).